We begin with the raw amino-acid sequence, 244 residues long: Eukaryotic translation initiation factor 4E type 1B (244 aa).

The span at 1 to 26 (MNKVEGGGHKEEVVVKEKEVVKEKPS) shows a compositional bias: basic and acidic residues. The disordered stretch occupies residues 1 to 57 (MNKVEGGGHKEEVVVKEKEVVKEKPSEATAEGVQAGEAKDLPGSLKTQRRKAHREHP). The segment at 65–68 (HPLQ) is EIF4EBP1/2/3 binding. Residue 84–85 (WQ) participates in mRNA binding. The interval 101 to 105 (WAVYS) is EIF4EBP1/2/3 binding. Position 130-131 (130-131 (WE)) interacts with mRNA. The tract at residues 160–167 (ETLLCLVG) is EIF4EBP1/2/3 binding. Residues 185–190 (RTKRDK) and 233–235 (AKS) contribute to the mRNA site.

The protein belongs to the eukaryotic initiation factor 4E family. In terms of assembly, EIF4F is a multi-subunit complex, the composition of which varies with external and internal environmental conditions. It is composed of at least EIF4A, EIF4E and EIF4G.

Its function is as follows. Recognizes and binds the 7-methylguanosine-containing mRNA cap during an early step in the initiation of protein synthesis and facilitates ribosome binding by inducing the unwinding of the mRNAs secondary structures. The polypeptide is Eukaryotic translation initiation factor 4E type 1B (Eif4e1b) (Mus musculus (Mouse)).